The chain runs to 349 residues: Protein RecA (349 aa).

65 to 72 (GPESSGKT) lines the ATP pocket.

It belongs to the RecA family.

It localises to the cytoplasm. Functionally, can catalyze the hydrolysis of ATP in the presence of single-stranded DNA, the ATP-dependent uptake of single-stranded DNA by duplex DNA, and the ATP-dependent hybridization of homologous single-stranded DNAs. It interacts with LexA causing its activation and leading to its autocatalytic cleavage. In Aliarcobacter butzleri (strain RM4018) (Arcobacter butzleri), this protein is Protein RecA.